The following is a 620-amino-acid chain: MSFDIAKYPTLALVDSTQELRLLPKESLPKLCDELRRYLLDSVSRSSGHFASGLGTVELTVALHYVYNTPFDQLIWDVGHQAYPHKILTGRRDKIGTIRQKGGLHPFPWRGESEYDVLSVGHSSTSISAGIGIAVAAEKEGKNRRTVCVIGDGAITAGMAFEAMNHAGDIRPDMLVVLNDNEMSISENVGALNNHLAQLLSGKLYSSLREGGKKVFSGVPPIKELLKRTEEHIKGMVVPGTLFEELGFNYIGPVDGHDVLGLITTLKNMRDLKGPQFLHIMTKKGRGYEPAEKDPITFHAVPKFDPSSGCLPKSSGGLPSYSKIFGDWLCETAAKDNKLMAITPAMREGSGMVEFSRKFPDRYFDVAIAEQHAVTFAAGLAIGGYKPIVAIYSTFLQRAYDQVLHDVAIQKLPVLFAIDRAGIVGADGQTHQGAFDLSYLRCIPEMVIMTPSDENECRQMLYTGYHYNDGPSAVRYPRGNAVGVELTPLEKLPIGKGIVKRRGEKLAILNFGTLMPEAAKVAESLNATLVDMRFVKPLDEALILEIAASHEALVTVEENAIMGGAGSGVNEVLMAHRKPVPVLNIGLPDFFIPQGTQEEMRAELGLDAAGMEAKIKAWLA.

Thiamine diphosphate-binding positions include His-80 and Gly-121 to Ser-123. Position 152 (Asp-152) interacts with Mg(2+). Thiamine diphosphate is bound by residues Gly-153–Ala-154, Asn-181, Tyr-288, and Glu-370. Asn-181 serves as a coordination point for Mg(2+).

The protein belongs to the transketolase family. DXPS subfamily. Homodimer. Mg(2+) serves as cofactor. Requires thiamine diphosphate as cofactor.

It carries out the reaction D-glyceraldehyde 3-phosphate + pyruvate + H(+) = 1-deoxy-D-xylulose 5-phosphate + CO2. It participates in metabolic intermediate biosynthesis; 1-deoxy-D-xylulose 5-phosphate biosynthesis; 1-deoxy-D-xylulose 5-phosphate from D-glyceraldehyde 3-phosphate and pyruvate: step 1/1. Its function is as follows. Catalyzes the acyloin condensation reaction between C atoms 2 and 3 of pyruvate and glyceraldehyde 3-phosphate to yield 1-deoxy-D-xylulose-5-phosphate (DXP). The polypeptide is 1-deoxy-D-xylulose-5-phosphate synthase (Escherichia coli (strain SMS-3-5 / SECEC)).